A 2633-amino-acid chain; its full sequence is Non-reducing polyketide synthase sor2 (2633 aa).

The interval 67–237 is N-terminal acylcarrier protein transacylase domain (SAT); sequence VSNAQKLAEW…TTSTRTVAAL (171 aa). The Nucleophile; for transacylase activity role is filled by Cys140. Catalysis depends on His258, which acts as the Proton donor/acceptor; for transacylase activity. Residues 389 to 814 enclose the Ketosynthase family 3 (KS3) domain; the sequence is ENDIAVIGMA…GSNASVIIKQ (426 aa). Active-site for beta-ketoacyl synthase activity residues include Cys561, His696, and His737. Residues 928–1239 are malonyl-CoA:ACP transacylase (MAT) domain; it reads CFGGQVSTFV…SKASSQLSDV (312 aa). An N-terminal hotdog fold region spans residues 1307–1437; the sequence is PQPVGLYTLL…GQLHFQASDD (131 aa). The PKS/mFAS DH domain occupies 1307 to 1627; sequence PQPVGLYTLL…YAPVSLDQLF (321 aa). Residues 1338–1509 form a product template (PT) domain region; it reads MSDHAIGKAQ…SNESAGRLVR (172 aa). The C-terminal hotdog fold stretch occupies residues 1464 to 1627; sequence GRSDEVIQGQ…YAPVSLDQLF (164 aa). The 75-residue stretch at 1684–1758 folds into the Carrier domain; it reads EELWLRLRPV…GILKFLQSTL (75 aa). Ser1718 bears the O-(pantetheine 4'-phosphoryl)serine mark. Residues 1762 to 1792 are disordered; sequence DVHDSSETMSTVSSDGNVHSPPTSGSEMASP. Residues 1768 to 1790 show a composition bias toward polar residues; sequence ETMSTVSSDGNVHSPPTSGSEMA. Positions 1982 to 2166 are methyltransferase domain; the sequence is FELMADFLTR…ASGFKHVRWT (185 aa). The tract at residues 2253–2495 is NADPH-binding (R) domain; that stretch reads VTGATGSLGS…TLRALPDVDG (243 aa).

Requires pantetheine 4'-phosphate as cofactor.

Its pathway is secondary metabolite biosynthesis. Non-reducing polyketide synthase; part of the SOR gene cluster that mediates the biosynthesis of sorbicillinoids, a diverse group of yellow secondary metabolites that restrict growth of competing pathogenic fungi but not of bacteria. Sorbicillinoids biosynthesis requires the action of two PKSs. The SOR cluster is required for the production of trichodimerol and dihydrotrichotetronin, with sor2 being sufficient for production of trichodimerol, but not dihydrotrichotetronin in the light. Sor1 iteratively combines three acetyl units and the growing chain is modified by the ketoacyl reductase subunit, and optional by the enoyl reductase subunit in the second cycle. The polyketide is then handed over to the PKS sor2, which adds three more acetyl units, and two methyl groups. Sor2 releases an aldehyde, which undergoes spontaneous cyclization resulting in the formation of sorbicillin or 2',3'-dihydrosorbicillin. The monooxygenase sor5 oxidizes sorbicillin and 2',3'-dihydrosorbicillin to 2',3'-dihydrosorbicillinol and sorbicillinol, respectively. The oxidoreductase sor8 further converts sorbicillinol into oxosorbicillinol. Sorbicillinol is the building block for the other sorbicillinoids such as disorbicillinol, bisvertinolon, dihydrobisvertinolone, and dihydrotrichotetronine. The polypeptide is Non-reducing polyketide synthase sor2 (Hypocrea jecorina (strain QM6a) (Trichoderma reesei)).